Here is a 197-residue protein sequence, read N- to C-terminus: Guanylate kinase (197 aa).

The 179-residue stretch at Gly-7 to Val-185 folds into the Guanylate kinase-like domain. Ser-14–Ser-21 is a binding site for ATP.

Belongs to the guanylate kinase family.

The protein resides in the cytoplasm. The catalysed reaction is GMP + ATP = GDP + ADP. Its function is as follows. Essential for recycling GMP and indirectly, cGMP. The chain is Guanylate kinase from Rickettsia typhi (strain ATCC VR-144 / Wilmington).